We begin with the raw amino-acid sequence, 268 residues long: Ubiquinone/menaquinone biosynthesis C-methyltransferase UbiE (268 aa).

The interval 1 to 23 (MTDQHAFATEQVQLDPTLSPTTE) is disordered. Residues 10–23 (EQVQLDPTLSPTTE) show a composition bias toward polar residues. Residues T91, D112, 140–141 (NA), and S157 contribute to the S-adenosyl-L-methionine site.

It belongs to the class I-like SAM-binding methyltransferase superfamily. MenG/UbiE family.

The catalysed reaction is a 2-demethylmenaquinol + S-adenosyl-L-methionine = a menaquinol + S-adenosyl-L-homocysteine + H(+). It carries out the reaction a 2-methoxy-6-(all-trans-polyprenyl)benzene-1,4-diol + S-adenosyl-L-methionine = a 5-methoxy-2-methyl-3-(all-trans-polyprenyl)benzene-1,4-diol + S-adenosyl-L-homocysteine + H(+). The protein operates within quinol/quinone metabolism; menaquinone biosynthesis; menaquinol from 1,4-dihydroxy-2-naphthoate: step 2/2. It participates in cofactor biosynthesis; ubiquinone biosynthesis. Functionally, methyltransferase required for the conversion of demethylmenaquinol (DMKH2) to menaquinol (MKH2) and the conversion of 2-polyprenyl-6-methoxy-1,4-benzoquinol (DDMQH2) to 2-polyprenyl-3-methyl-6-methoxy-1,4-benzoquinol (DMQH2). This is Ubiquinone/menaquinone biosynthesis C-methyltransferase UbiE from Pasteurella multocida (strain Pm70).